Here is a 913-residue protein sequence, read N- to C-terminus: Eukaryotic translation initiation factor 3 subunit C (913 aa).

A disordered region spans residues 1–31; the sequence is MSRFFANGSDSESESSEEEVQASNFNKANNF. Positions 11–20 are enriched in acidic residues; it reads SESESSEEEV. Residues 21-31 show a composition bias toward polar residues; sequence QASNFNKANNF. Phosphoserine occurs at positions 34, 165, 177, and 186. 2 disordered regions span residues 157-195 and 208-285; these read FREA…AGTG and PTKV…EDGE. A compositionally biased stretch (acidic residues) spans 162-171; it reads DQESDVDEGE. Over residues 172 to 184 the composition is skewed to basic and acidic residues; that stretch reads GEAHDSDAERAGA. The span at 214–239 shows a compositional bias: acidic residues; it reads DEDDSDDSIDWDSDTESETESSEDEN. Over residues 244–263 the composition is skewed to basic and acidic residues; that stretch reads MRERFLKRTTEKEDKDDDKR. Residues 264 to 276 show a composition bias toward basic residues; sequence KDKRKEQKHKVRK. Residues 645-821 form the PCI domain; that stretch reads FHMHINLELL…ETVVMHRSEP (177 aa). Residues 856 to 913 are disordered; the sequence is RGNMGNRDRGYNRNQNNQGGNWGGQRRDNRNQRNRNQRGHHKQQQQQQQQQVQTIEEE. The segment covering 887-898 has biased composition (basic residues); sequence QRNRNQRGHHKQ.

It belongs to the eIF-3 subunit C family. Component of the eukaryotic translation initiation factor 3 (eIF-3) complex. The eIF-3 complex interacts with pix.

Its subcellular location is the cytoplasm. Functionally, component of the eukaryotic translation initiation factor 3 (eIF-3) complex, which is involved in protein synthesis of a specialized repertoire of mRNAs and, together with other initiation factors, stimulates binding of mRNA and methionyl-tRNAi to the 40S ribosome. The eIF-3 complex specifically targets and initiates translation of a subset of mRNAs involved in cell proliferation. The chain is Eukaryotic translation initiation factor 3 subunit C from Drosophila virilis (Fruit fly).